Here is a 125-residue protein sequence, read N- to C-terminus: Small ribosomal subunit protein bS6 (125 aa).

Positions 100-125 (SPMVKAREERKPLTEVENNDFEDAEE) are disordered. Residues 104–113 (KAREERKPLT) show a composition bias toward basic and acidic residues. Residues 116–125 (ENNDFEDAEE) show a composition bias toward acidic residues.

Belongs to the bacterial ribosomal protein bS6 family.

Its function is as follows. Binds together with bS18 to 16S ribosomal RNA. This is Small ribosomal subunit protein bS6 from Histophilus somni (strain 129Pt) (Haemophilus somnus).